The following is a 291-amino-acid chain: Probable L-ascorbate peroxidase 4, peroxisomal (291 aa).

H40 (proton acceptor) is an active-site residue. A heme b-binding site is contributed by H160. K(+)-binding residues include T161, T177, and D184. A helical transmembrane segment spans residues 263–283 (VLAQSAVGVAVAAAVVIVSYL).

This sequence belongs to the peroxidase family. Ascorbate peroxidase subfamily. Heme b serves as cofactor. In terms of tissue distribution, expressed in leaves, stems and flowers.

The protein localises to the peroxisome membrane. It catalyses the reaction L-ascorbate + H2O2 = L-dehydroascorbate + 2 H2O. Plays a key role in hydrogen peroxide removal. In Oryza sativa subsp. japonica (Rice), this protein is Probable L-ascorbate peroxidase 4, peroxisomal.